Reading from the N-terminus, the 151-residue chain is Myosin catalytic light chain, smooth muscle (151 aa).

The residue at position 1 (Ala-1) is an N-acetylalanine. EF-hand domains lie at 6-41 (DRITECQEAFELFDRSAEGKVFLGQVGDILRALGQN), 83-118 (GSYEDFVEGLRVFDKENNGKIMGAELRHVLSTLGEK), and 119-151 (MSEEEVEESLLQGQQDPNGCIHYEEFSKYLLEG).

In terms of biological role, in molluscan muscle, calcium regulation is associated with myosin rather than with actin. Muscle myosin contains two types of light chains: the catalytic light chain, essential for ATPase activity, and the regulatory light chain, a calcium-binding protein responsible for Ca(2+) dependent binding and Ca(2+) dependent Mg-ATPase activity. The polypeptide is Myosin catalytic light chain, smooth muscle (Halocynthia roretzi (Sea squirt)).